A 572-amino-acid chain; its full sequence is uncharacterized protein (572 aa).

Residues 553 to 572 (PSPAPKPVTVRKKKGNSPIS) form a disordered region. Basic residues predominate over residues 561 to 572 (TVRKKKGNSPIS).

This is an uncharacterized protein from Homo sapiens (Human).